A 198-amino-acid chain; its full sequence is MDFLNYPEPLADLITGLSRLPGIGPKTAGRLAFYLLQQPQVAENLAEAMIRAQREIRQCSLCCNYTDHDPCPICTGEKRERTLLCIVEQPRDVVSLEKTREFKGLYHVLHGVISPLEGVGPEQLTISKLLGRLEGVQEVVMAMNPTVEGEATALYLSRLLKPLGIKVTRIAHGLPVGGDLEYADEITIARALEGRRQI.

Residues 59-74 (CSLCCNYTDHDPCPIC) form a C4-type zinc finger. The region spanning 82–175 (TLLCIVEQPR…KVTRIAHGLP (94 aa)) is the Toprim domain.

It belongs to the RecR family.

In terms of biological role, may play a role in DNA repair. It seems to be involved in an RecBC-independent recombinational process of DNA repair. It may act with RecF and RecO. In Desulfitobacterium hafniense (strain DSM 10664 / DCB-2), this protein is Recombination protein RecR.